The chain runs to 369 residues: Olfactory receptor 2T1 (369 aa).

At 1-76 the chain is on the extracellular side; it reads MWQEYYFLNV…LFNRKETSGL (76 aa). N-linked (GlcNAc...) asparagine glycosylation occurs at Asn-56. A helical transmembrane segment spans residues 77-97; it reads IFAIISIIFFTALMANGVMIF. Over 98 to 107 the chain is Cytoplasmic; the sequence is LIQTDLRLHT. A helical transmembrane segment spans residues 108-128; that stretch reads PMYFLLSHLSLIDMMYISTIV. Over 129–148 the chain is Extracellular; the sequence is PKMLVNYLLDQRTISFVGCT. Residues Cys-147 and Cys-239 are joined by a disulfide bond. Residues 149–169 traverse the membrane as a helical segment; it reads AQHFLYLTLVGAEFFLLGLMA. Residues 170–191 lie on the Cytoplasmic side of the membrane; it reads YDRYVAICNPLRYPVLMSRRVC. A helical membrane pass occupies residues 192 to 212; that stretch reads WMIIAGSWFGGSLDGFLLTPI. The Extracellular portion of the chain corresponds to 213–247; that stretch reads TMSFPFCNSREINHFFCEAPAVLKLACADTALYET. Residues 248-268 form a helical membrane-spanning segment; sequence VMYVCCVLMLLIPFSVVLASY. Topologically, residues 269-286 are cytoplasmic; it reads ARILTTVQCMSSVEGRKK. The helical transmembrane segment at 287 to 307 threads the bilayer; the sequence is AFATCSSHMTVVSLFYGAAMY. At 308–321 the chain is on the extracellular side; it reads TYMLPHSYHKPAQD. The helical transmembrane segment at 322–342 threads the bilayer; the sequence is KVLSVFYTILTPMLNPLIYSL. Residues 343–369 lie on the Cytoplasmic side of the membrane; that stretch reads RNKDVTGALKRALGRFKGPQRVSGGVF.

The protein belongs to the G-protein coupled receptor 1 family.

Its subcellular location is the cell membrane. In terms of biological role, odorant receptor. The chain is Olfactory receptor 2T1 (OR2T1) from Homo sapiens (Human).